Reading from the N-terminus, the 239-residue chain is 1-(5-phosphoribosyl)-5-[(5-phosphoribosylamino)methylideneamino] imidazole-4-carboxamide isomerase (239 aa).

The active-site Proton acceptor is aspartate 8. Aspartate 129 (proton donor) is an active-site residue.

It belongs to the HisA/HisF family.

Its subcellular location is the cytoplasm. It carries out the reaction 1-(5-phospho-beta-D-ribosyl)-5-[(5-phospho-beta-D-ribosylamino)methylideneamino]imidazole-4-carboxamide = 5-[(5-phospho-1-deoxy-D-ribulos-1-ylimino)methylamino]-1-(5-phospho-beta-D-ribosyl)imidazole-4-carboxamide. It participates in amino-acid biosynthesis; L-histidine biosynthesis; L-histidine from 5-phospho-alpha-D-ribose 1-diphosphate: step 4/9. The polypeptide is 1-(5-phosphoribosyl)-5-[(5-phosphoribosylamino)methylideneamino] imidazole-4-carboxamide isomerase (Bacillus cereus (strain Q1)).